A 641-amino-acid polypeptide reads, in one-letter code: Macrolide export ATP-binding/permease protein MacB (641 aa).

In terms of domain architecture, ABC transporter spans 2 to 236; sequence IFLKNICKNI…LTLKTMSKEK (235 aa). 34–41 serves as a coordination point for ATP; it reads GQSGSGKT. 4 consecutive transmembrane segments (helical) span residues 265–285, 519–539, 571–591, and 604–624; these read ILTMLGIIIGIASVVCVVALG, ACVAVIALIVGGIGVMNIMLV, MICTIGAILGVILSIFVIFAF, and AYSVLLGLLSSMFIGVVFGFF.

Belongs to the ABC transporter superfamily. Macrolide exporter (TC 3.A.1.122) family. Homodimer.

The protein resides in the cell inner membrane. Functionally, non-canonical ABC transporter that contains transmembrane domains (TMD), which form a pore in the inner membrane, and an ATP-binding domain (NBD), which is responsible for energy generation. Confers resistance against macrolides. This is Macrolide export ATP-binding/permease protein MacB from Campylobacter jejuni subsp. jejuni serotype O:23/36 (strain 81-176).